The chain runs to 457 residues: Bifunctional protein GlmU (457 aa).

Residues methionine 1–arginine 230 form a pyrophosphorylase region. Residues leucine 9–glycine 12, lysine 23, glutamine 73, and glycine 78–threonine 79 contribute to the UDP-N-acetyl-alpha-D-glucosamine site. Aspartate 103 serves as a coordination point for Mg(2+). 4 residues coordinate UDP-N-acetyl-alpha-D-glucosamine: glycine 140, glutamate 155, asparagine 170, and asparagine 228. Asparagine 228 contacts Mg(2+). The linker stretch occupies residues isoleucine 231–asparagine 251. Residues glycine 252–lysine 457 form an N-acetyltransferase region. Positions 333 and 351 each coordinate UDP-N-acetyl-alpha-D-glucosamine. The active-site Proton acceptor is the histidine 363. UDP-N-acetyl-alpha-D-glucosamine-binding residues include tyrosine 366 and asparagine 377. Residues asparagine 386–tyrosine 387, alanine 423, and arginine 440 contribute to the acetyl-CoA site.

The protein in the N-terminal section; belongs to the N-acetylglucosamine-1-phosphate uridyltransferase family. This sequence in the C-terminal section; belongs to the transferase hexapeptide repeat family. Homotrimer. The cofactor is Mg(2+).

Its subcellular location is the cytoplasm. The catalysed reaction is alpha-D-glucosamine 1-phosphate + acetyl-CoA = N-acetyl-alpha-D-glucosamine 1-phosphate + CoA + H(+). The enzyme catalyses N-acetyl-alpha-D-glucosamine 1-phosphate + UTP + H(+) = UDP-N-acetyl-alpha-D-glucosamine + diphosphate. The protein operates within nucleotide-sugar biosynthesis; UDP-N-acetyl-alpha-D-glucosamine biosynthesis; N-acetyl-alpha-D-glucosamine 1-phosphate from alpha-D-glucosamine 6-phosphate (route II): step 2/2. It functions in the pathway nucleotide-sugar biosynthesis; UDP-N-acetyl-alpha-D-glucosamine biosynthesis; UDP-N-acetyl-alpha-D-glucosamine from N-acetyl-alpha-D-glucosamine 1-phosphate: step 1/1. Its pathway is bacterial outer membrane biogenesis; LPS lipid A biosynthesis. Catalyzes the last two sequential reactions in the de novo biosynthetic pathway for UDP-N-acetylglucosamine (UDP-GlcNAc). The C-terminal domain catalyzes the transfer of acetyl group from acetyl coenzyme A to glucosamine-1-phosphate (GlcN-1-P) to produce N-acetylglucosamine-1-phosphate (GlcNAc-1-P), which is converted into UDP-GlcNAc by the transfer of uridine 5-monophosphate (from uridine 5-triphosphate), a reaction catalyzed by the N-terminal domain. The protein is Bifunctional protein GlmU of Listeria welshimeri serovar 6b (strain ATCC 35897 / DSM 20650 / CCUG 15529 / CIP 8149 / NCTC 11857 / SLCC 5334 / V8).